The sequence spans 555 residues: Probable terpene synthase 6 (555 aa).

Positions 309, 313, and 460 each coordinate Mg(2+). The DDXXD motif signature appears at Asp309 to Asp313.

It belongs to the terpene synthase family. Requires Mg(2+) as cofactor.

Probable sesquiterpene synthase. The sequence is that of Probable terpene synthase 6 (TPS6) from Ricinus communis (Castor bean).